A 460-amino-acid chain; its full sequence is Transcription factor TGA10 (460 aa).

The span at 1–11 shows a compositional bias: basic residues; the sequence is MQGHHQNHHQH. Disordered regions lie at residues 1-29 and 43-163; these read MQGH…NKDG and LDGQ…PKTL. Residues 12–21 are compositionally biased toward low complexity; it reads LSSSSATSSH. 2 stretches are compositionally biased toward polar residues: residues 65 to 81 and 121 to 136; these read TQNL…NIFP and DLTN…QGSK. Over residues 138 to 162 the composition is skewed to basic and acidic residues; it reads IKKEGNRKGLASSDHDIPKSSDPKT. Positions 159-203 constitute a bZIP domain; that stretch reads DPKTLRRLAQNREAARKSRLRKKAYVQQLESCRIKLTQLEQEIQR. The interval 161–181 is basic motif; sequence KTLRRLAQNREAARKSRLRKK. The Nuclear localization signal motif lies at 163–170; sequence LRRLAQNR. The tract at residues 187-201 is leucine-zipper; the sequence is LESCRIKLTQLEQEI. Residues 236 to 455 form the DOG1 domain; the sequence is AAVFDMEYAR…QALSSLWLAR (220 aa).

The protein belongs to the bZIP family. Homodimer. Binds DNA as a dimer. Interacts with floral glutaredoxins GRXC7/ROXY1 and GRXC8/ROXY2 in the nucleus. Interacts with TGA1, TGA2, TGA3, TGA4, TGA5, TGA6, TGA7, TGA9 and PAN. In terms of tissue distribution, expressed at low levels in inflorescence apex and flowers.

The protein resides in the nucleus. Its function is as follows. Together with TGA9, basic leucine-zipper transcription factor required for anther development, probably via the activation of SPL expression in anthers and via the regulation of genes with functions in early and middle tapetal development. Required for signaling responses to pathogen-associated molecular patterns (PAMPs) such as flg22 that involves chloroplastic reactive oxygen species (ROS) production and subsequent expression of H(2)O(2)-responsive genes. This is Transcription factor TGA10 from Arabidopsis thaliana (Mouse-ear cress).